The primary structure comprises 118 residues: MLEKVLKRKNALRAKRKLRVRGKIFGTAQKPRVSLFRSNRYLYAQAINDESGLTLASVDGKKLGLGNNKEEAKKIAASFAASLQEAGIKEVVFDRNGYLYHGVVASFADSLRENGIGL.

This sequence belongs to the universal ribosomal protein uL18 family. In terms of assembly, part of the 50S ribosomal subunit; part of the 5S rRNA/L5/L18/L25 subcomplex. Contacts the 5S and 23S rRNAs.

In terms of biological role, this is one of the proteins that bind and probably mediate the attachment of the 5S RNA into the large ribosomal subunit, where it forms part of the central protuberance. The chain is Large ribosomal subunit protein uL18 from Wolinella succinogenes (strain ATCC 29543 / DSM 1740 / CCUG 13145 / JCM 31913 / LMG 7466 / NCTC 11488 / FDC 602W) (Vibrio succinogenes).